We begin with the raw amino-acid sequence, 291 residues long: Porphobilinogen deaminase (291 aa).

S-(dipyrrolylmethanemethyl)cysteine is present on Cys237.

This sequence belongs to the HMBS family. As to quaternary structure, monomer. It depends on dipyrromethane as a cofactor.

The enzyme catalyses 4 porphobilinogen + H2O = hydroxymethylbilane + 4 NH4(+). It functions in the pathway porphyrin-containing compound metabolism; protoporphyrin-IX biosynthesis; coproporphyrinogen-III from 5-aminolevulinate: step 2/4. In terms of biological role, tetrapolymerization of the monopyrrole PBG into the hydroxymethylbilane pre-uroporphyrinogen in several discrete steps. This chain is Porphobilinogen deaminase, found in Clostridium acetobutylicum (strain ATCC 824 / DSM 792 / JCM 1419 / IAM 19013 / LMG 5710 / NBRC 13948 / NRRL B-527 / VKM B-1787 / 2291 / W).